Reading from the N-terminus, the 91-residue chain is Cytochrome b-c1 complex subunit 6, mitochondrial (91 aa).

The span at 1–10 shows a compositional bias: basic and acidic residues; sequence MGLEDERKML. A mitochondrion-targeting transit peptide spans 1 to 13; sequence MGLEDERKMLTES. Residues 1–30 form a disordered region; that stretch reads MGLEDERKMLTESGDPEKEEEEEEELVDPL. The span at 17–27 shows a compositional bias: acidic residues; that stretch reads EKEEEEEEELV. Intrachain disulfides connect Cys37–Cys81 and Cys53–Cys67. Residue Lys42 is modified to N6-acetyllysine. Lys85 is subject to N6-acetyllysine.

This sequence belongs to the UQCRH/QCR6 family. In terms of assembly, component of the ubiquinol-cytochrome c oxidoreductase (cytochrome b-c1 complex, complex III, CIII), a multisubunit enzyme composed of 11 subunits. The complex is composed of 3 respiratory subunits cytochrome b, cytochrome c1 and Rieske protein UQCRFS1, 2 core protein subunits UQCRC1/QCR1 and UQCRC2/QCR2, and 6 low-molecular weight protein subunits UQCRH/QCR6, UQCRB/QCR7, UQCRQ/QCR8, UQCR10/QCR9, UQCR11/QCR10 and subunit 9, the cleavage product of Rieske protein UQCRFS1. The complex exists as an obligatory dimer and forms supercomplexes (SCs) in the inner mitochondrial membrane with NADH-ubiquinone oxidoreductase (complex I, CI) and cytochrome c oxidase (complex IV, CIV), resulting in different assemblies (supercomplex SCI(1)III(2)IV(1) and megacomplex MCI(2)III(2)IV(2)).

The protein resides in the mitochondrion inner membrane. Functionally, component of the ubiquinol-cytochrome c oxidoreductase, a multisubunit transmembrane complex that is part of the mitochondrial electron transport chain which drives oxidative phosphorylation. The respiratory chain contains 3 multisubunit complexes succinate dehydrogenase (complex II, CII), ubiquinol-cytochrome c oxidoreductase (cytochrome b-c1 complex, complex III, CIII) and cytochrome c oxidase (complex IV, CIV), that cooperate to transfer electrons derived from NADH and succinate to molecular oxygen, creating an electrochemical gradient over the inner membrane that drives transmembrane transport and the ATP synthase. The cytochrome b-c1 complex catalyzes electron transfer from ubiquinol to cytochrome c, linking this redox reaction to translocation of protons across the mitochondrial inner membrane, with protons being carried across the membrane as hydrogens on the quinol. In the process called Q cycle, 2 protons are consumed from the matrix, 4 protons are released into the intermembrane space and 2 electrons are passed to cytochrome c. The sequence is that of Cytochrome b-c1 complex subunit 6, mitochondrial (UQCRH) from Macaca fascicularis (Crab-eating macaque).